Here is a 1410-residue protein sequence, read N- to C-terminus: DNA-directed RNA polymerase subunit beta' (1410 aa).

Zn(2+) is bound by residues Cys70, Cys72, Cys85, and Cys88. Mg(2+) is bound by residues Asp460, Asp462, and Asp464. 4 residues coordinate Zn(2+): Cys814, Cys888, Cys895, and Cys898.

Belongs to the RNA polymerase beta' chain family. In terms of assembly, the RNAP catalytic core consists of 2 alpha, 1 beta, 1 beta' and 1 omega subunit. When a sigma factor is associated with the core the holoenzyme is formed, which can initiate transcription. It depends on Mg(2+) as a cofactor. Zn(2+) serves as cofactor.

The catalysed reaction is RNA(n) + a ribonucleoside 5'-triphosphate = RNA(n+1) + diphosphate. In terms of biological role, DNA-dependent RNA polymerase catalyzes the transcription of DNA into RNA using the four ribonucleoside triphosphates as substrates. The sequence is that of DNA-directed RNA polymerase subunit beta' from Shewanella denitrificans (strain OS217 / ATCC BAA-1090 / DSM 15013).